A 427-amino-acid chain; its full sequence is DNA topoisomerase 6 subunit A (427 aa).

A Topo IIA-type catalytic domain is found at 76 to 209; that stretch reads LSLSSVQTEI…LNVIAAEKGV (134 aa). The O-(5'-phospho-DNA)-tyrosine intermediate role is filled by Tyr170. Mg(2+) is bound by residues Glu256 and Asp308.

This sequence belongs to the TOP6A family. In terms of assembly, homodimer. Heterotetramer of two TOP6A and two TOP6B subunits. Interacts with BIN4 and RHL1. Requires Mg(2+) as cofactor. Highly expressed in leaves, stems, flowers and seedlings.

The protein resides in the nucleus. The catalysed reaction is ATP-dependent breakage, passage and rejoining of double-stranded DNA.. Functionally, component of the DNA topoisomerase VI involved in chromatin organization and progression of endoreduplication cycles. Relaxes both positive and negative superturns and exhibits a strong decatenase activity. Involved in cell-elongation processes. This Arabidopsis thaliana (Mouse-ear cress) protein is DNA topoisomerase 6 subunit A.